A 66-amino-acid polypeptide reads, in one-letter code: Large ribosomal subunit protein bL35 (66 aa).

Residues 1-26 (MPKMKTHRGSAKRFKKTGSGKLKRSH) show a composition bias toward basic residues. The disordered stretch occupies residues 1–48 (MPKMKTHRGSAKRFKKTGSGKLKRSHAYTSHLFANKSQKQKRKLRKSA).

This sequence belongs to the bacterial ribosomal protein bL35 family.

The sequence is that of Large ribosomal subunit protein bL35 from Bacillus licheniformis (strain ATCC 14580 / DSM 13 / JCM 2505 / CCUG 7422 / NBRC 12200 / NCIMB 9375 / NCTC 10341 / NRRL NRS-1264 / Gibson 46).